The sequence spans 150 residues: Large ribosomal subunit protein bL9 (150 aa).

This sequence belongs to the bacterial ribosomal protein bL9 family.

Binds to the 23S rRNA. In Vibrio atlanticus (strain LGP32) (Vibrio splendidus (strain Mel32)), this protein is Large ribosomal subunit protein bL9.